The following is a 545-amino-acid chain: Probable target of rapamycin complex 2 subunit BIT2 (545 aa).

2 disordered regions span residues M1–K24 and D78–S166. Composition is skewed to polar residues over residues A11–K24, I106–R130, and R151–S166.

Interacts with the target of rapamycin complex 2 (TORC2) subunit TSC11 and the TORC2 effectors SLM1 and SLM2.

The protein is Probable target of rapamycin complex 2 subunit BIT2 (BIT2) of Saccharomyces cerevisiae (strain ATCC 204508 / S288c) (Baker's yeast).